A 1251-amino-acid polypeptide reads, in one-letter code: Myosin-1 (1251 aa).

Positions 1-37 (MGQSKRPFKNKEEKKSRGFGRSRHDDAGAGGRPQVKK) are disordered. Over residues 9–27 (KNKEEKKSRGFGRSRHDDA) the composition is skewed to basic and acidic residues. Positions 48–727 (IGVSDLTLLS…TLFALEHMRD (680 aa)) constitute a Myosin motor domain. Residue 141 to 148 (GESGAGKT) participates in ATP binding. A Phosphoserine modification is found at Ser369. The segment at 416–498 (TIGILDIYGF…PGVFAALNDA (83 aa)) is actin-binding. 2 consecutive IQ domains span residues 731-751 (HNMA…RTEC) and 752-777 (AIRI…QGHK). A TH1 domain is found at 785 to 980 (RRRYSLVGSR…PGEPANSVSK (196 aa)). Disordered regions lie at residues 958–1093 (RDDV…SNEL) and 1135–1227 (AKTP…ASIA). A compositionally biased stretch (low complexity) spans 1040–1052 (VAQSVTAVAAAHA). The span at 1061 to 1073 (RPPPPPPPTQPPA) shows a compositional bias: pro residues. One can recognise an SH3 domain in the interval 1074–1135 (PKKDTAKALY…PEAYLEPIVA (62 aa)). The segment covering 1139–1148 (SLPPPPPSLP) has biased composition (pro residues). 2 stretches are compositionally biased toward polar residues: residues 1150 to 1161 (QSKSAVSNTLPN) and 1216 to 1225 (ATPSSLSNAS).

The protein belongs to the TRAFAC class myosin-kinesin ATPase superfamily. Myosin family. In terms of processing, phosphorylation of the TEDS site (Ser-369) is required for the polarization of the actin cytoskeleton. Phosphorylation probably activates the myosin-I ATPase activity.

It localises to the cytoplasm. The protein resides in the cytoskeleton. Its subcellular location is the actin patch. Its function is as follows. Type-I myosin implicated in the organization of the actin cytoskeleton. Required for proper actin cytoskeleton polarization. At the cell cortex, assembles in patch-like structures together with proteins from the actin-polymerizing machinery and promotes actin assembly. Functions as actin nucleation-promoting factor (NPF) for the Arp2/3 complex. This Coccidioides immitis (strain RS) (Valley fever fungus) protein is Myosin-1 (MYO1).